The primary structure comprises 137 residues: Probable S-adenosyl-L-methionine-binding protein MTH_1797 (137 aa).

Residues 8-137 (IRPVGVVRSP…YYEDIDSLGF (130 aa)) enclose the TsaA-like domain. Residues 25 to 27 (PAQ), 63 to 64 (HL), Arg-87, Leu-97, and 117 to 120 (LDGS) each bind S-adenosyl-L-methionine.

It belongs to the tRNA methyltransferase O family.

This Methanothermobacter thermautotrophicus (strain ATCC 29096 / DSM 1053 / JCM 10044 / NBRC 100330 / Delta H) (Methanobacterium thermoautotrophicum) protein is Probable S-adenosyl-L-methionine-binding protein MTH_1797.